The chain runs to 623 residues: Interleukin-27 receptor subunit alpha (623 aa).

Positions 1–24 are cleaved as a signal peptide; sequence MNRLRVARLTPLELLLSLMSLLLG. Residues 25 to 510 are Extracellular-facing; sequence TRPHGSPGPL…HLPDNRIRWK (486 aa). 2 consecutive Fibronectin type-III domains span residues 30–124 and 125–225; these read SPGP…MKPD and TPQI…TPFL. N-linked (GlcNAc...) asparagine glycosylation occurs at Asn-46. A WSXWS motif motif is present at residues 211 to 215; it reads WGEWS. Residues Asn-296, Asn-305, Asn-360, Asn-368, and Asn-461 are each glycosylated (N-linked (GlcNAc...) asparagine). Fibronectin type-III domains follow at residues 316 to 412 and 413 to 505; these read APCD…VPLA and GPAV…LPDN. Residues 511-531 traverse the membrane as a helical segment; the sequence is ALPWFLSLWGLLLMGCGLSLA. Over 532–623 the chain is Cytoplasmic; sequence STRCLQARCL…PTPEELGLLV (92 aa). The Box 1 motif signature appears at 552 to 560; that stretch reads IWERVPDPA.

It belongs to the type I cytokine receptor family. Type 2 subfamily. As to expression, expressed in CD4+ and CD8+ T-cells, B-cells, natural killer cells and macrophages. Highest levels in CD4+ T-cells and natural killer cells. Expression highest in Th0 cells.

It localises to the membrane. In terms of biological role, receptor for IL27. Requires IL6ST/GP130 to mediate signal transduction in response to IL27. This signaling system acts through STAT3 and STAT1. Involved in the regulation of Th1-type immune responses. Also appears to be involved in innate defense mechanisms. The protein is Interleukin-27 receptor subunit alpha (Il27ra) of Mus musculus (Mouse).